The chain runs to 210 residues: Vacuolar protein sorting-associated protein 2 homolog 3 (210 aa).

Positions 1-23 (MNIFTKKPNPREVLRESKREMTQ) are disordered. The span at 9–23 (NPREVLRESKREMTQ) shows a compositional bias: basic and acidic residues. Residues 28 to 84 (IEKEIGSLQSEEKKLVLEIKRTAKSGNEGATKILARQLIRLRQQIANLQGSRAQMRG) adopt a coiled-coil conformation. The disordered stretch occupies residues 178–200 (LSSAPKGKIGGKKAEDVGSSGID).

It belongs to the SNF7 family. As to quaternary structure, component of the endosomal sorting required for transport complex III (ESCRT-III), composed at least of VPS2, VPS20, VPS24 and VPS32.

The protein resides in the endosome. Component of the ESCRT-III complex, which is required for multivesicular bodies (MVBs) formation and sorting of endosomal cargo proteins into MVBs. The ESCRT-III complex is probably involved in the concentration of MVB cargo. The chain is Vacuolar protein sorting-associated protein 2 homolog 3 (VPS2.3) from Arabidopsis thaliana (Mouse-ear cress).